A 299-amino-acid chain; its full sequence is Oxygen-dependent coproporphyrinogen-III oxidase (299 aa).

Ser92 contacts substrate. The a divalent metal cation site is built by His96 and His106. The active-site Proton donor is the His106. 108 to 110 (NVR) is a binding site for substrate. 2 residues coordinate a divalent metal cation: His145 and His175. The interval 240–275 (YVEFNLVWDRGTLFGLQTGGRTESILMSMPPLVRWE) is important for dimerization. 258–260 (GGR) lines the substrate pocket.

This sequence belongs to the aerobic coproporphyrinogen-III oxidase family. As to quaternary structure, homodimer. The cofactor is a divalent metal cation.

Its subcellular location is the cytoplasm. The enzyme catalyses coproporphyrinogen III + O2 + 2 H(+) = protoporphyrinogen IX + 2 CO2 + 2 H2O. It participates in porphyrin-containing compound metabolism; protoporphyrin-IX biosynthesis; protoporphyrinogen-IX from coproporphyrinogen-III (O2 route): step 1/1. Involved in the heme biosynthesis. Catalyzes the aerobic oxidative decarboxylation of propionate groups of rings A and B of coproporphyrinogen-III to yield the vinyl groups in protoporphyrinogen-IX. The sequence is that of Oxygen-dependent coproporphyrinogen-III oxidase from Salmonella arizonae (strain ATCC BAA-731 / CDC346-86 / RSK2980).